The sequence spans 457 residues: Argininosuccinate lyase (457 aa).

This sequence belongs to the lyase 1 family. Argininosuccinate lyase subfamily.

The protein localises to the cytoplasm. The enzyme catalyses 2-(N(omega)-L-arginino)succinate = fumarate + L-arginine. It participates in amino-acid biosynthesis; L-arginine biosynthesis; L-arginine from L-ornithine and carbamoyl phosphate: step 3/3. This Escherichia coli O127:H6 (strain E2348/69 / EPEC) protein is Argininosuccinate lyase.